We begin with the raw amino-acid sequence, 299 residues long: Hemolysin C homolog (299 aa).

2 CBS domains span residues 80-142 and 145-202; these read MVPR…NGRL and LIRK…IDDE.

The protein belongs to the UPF0053 family. Hemolysin C subfamily.

This chain is Hemolysin C homolog (tlyC), found in Rickettsia rickettsii (strain Sheila Smith).